We begin with the raw amino-acid sequence, 243 residues long: Probable transcriptional regulatory protein Athe_0816 (243 aa).

Belongs to the TACO1 family.

The protein resides in the cytoplasm. The polypeptide is Probable transcriptional regulatory protein Athe_0816 (Caldicellulosiruptor bescii (strain ATCC BAA-1888 / DSM 6725 / KCTC 15123 / Z-1320) (Anaerocellum thermophilum)).